Consider the following 362-residue polypeptide: Glutamate 5-kinase (362 aa).

Position 3 (K3) interacts with ATP. Substrate is bound by residues S43, D128, and N140. ATP-binding positions include 160-161 (TD) and 202-208 (TGGMRTK). The PUA domain occupies 267 to 348 (PGTILIDAGA…REIEPILGYS (82 aa)).

The protein belongs to the glutamate 5-kinase family.

The protein localises to the cytoplasm. It carries out the reaction L-glutamate + ATP = L-glutamyl 5-phosphate + ADP. It functions in the pathway amino-acid biosynthesis; L-proline biosynthesis; L-glutamate 5-semialdehyde from L-glutamate: step 1/2. Its function is as follows. Catalyzes the transfer of a phosphate group to glutamate to form L-glutamate 5-phosphate. This chain is Glutamate 5-kinase, found in Xanthomonas campestris pv. campestris (strain 8004).